The chain runs to 379 residues: Stimulator of interferon genes protein (379 aa).

Residues Met-1–Gly-17 lie on the Cytoplasmic side of the membrane. The mediates interaction with ZDHHC1 and ZDHHC11 stretch occupies residues Met-1–Leu-190. The chain crosses the membrane as a helical span at residues Ala-18 to Trp-34. Lys-20 is covalently cross-linked (Glycyl lysine isopeptide (Lys-Gly) (interchain with G-Cter in ubiquitin)). At Gly-35–Leu-44 the chain is on the lumenal side. The chain crosses the membrane as a helical span at residues Arg-45 to Glu-69. Residues Leu-70 to Cys-91 lie on the Cytoplasmic side of the membrane. 2 S-palmitoyl cysteine lipidation sites follow: Cys-88 and Cys-91. Residues Pro-92 to Tyr-106 traverse the membrane as a helical segment. The Lumenal portion of the chain corresponds to Tyr-107–Pro-116. The chain crosses the membrane as a helical span at residues Phe-117–Leu-134. At Gly-135–Ser-379 the chain is on the cytoplasmic side. Residue Lys-150 forms a Glycyl lysine isopeptide (Lys-Gly) (interchain with G-Cter in ubiquitin) linkage. Residues Phe-153 to Glu-340 form a cyclic dinucleotide-binding domain (CBD) region. 2 residues coordinate 2',3'-cGAMP: Ser-162 and Tyr-167. Ser-162 and Tyr-167 together coordinate 3',3'-c-di-GMP. Tyr-167 lines the 2',3'-cUAMP pocket. At Thr-229 the chain carries Phosphothreonine. Lys-236 participates in a covalent cross-link: Glycyl lysine isopeptide (Lys-Gly) (interchain with G-Cter in ubiquitin). Position 238 (Arg-238) interacts with 2',3'-cGAMP. Arg-238 serves as a coordination point for 2',3'-cUAMP. Residues Arg-238–Ser-241 and Thr-263 each bind 3',3'-c-di-GMP. Ser-241 is modified (phosphoserine). Thr-263 provides a ligand contact to 2',3'-cGAMP. Position 263 (Thr-263) interacts with 2',3'-cUAMP. Lys-338 participates in a covalent cross-link: Glycyl lysine isopeptide (Lys-Gly) (interchain with G-Cter in SUMO). The segment at Glu-340 to Ser-379 is C-terminal tail (CTT). Residues Val-341–Lys-370 form a disordered region. Positions Ser-345 to Gln-359 are enriched in polar residues. At Thr-354 the chain carries Phosphothreonine. Ser-355 is modified (phosphoserine; by MAP3K7). Thr-356 carries the post-translational modification Phosphothreonine. Ser-358 and Ser-366 each carry phosphoserine; by TBK1. Residues Leu-363 to Ser-366 carry the pLxIS motif motif.

It belongs to the STING family. Homodimer; forms a homodimer in absence of cyclic nucleotide (c-di-GMP or cGAMP); 'Lys-63'-linked ubiquitination at Lys-150 is required for homodimerization. Homotetramer; in presence of cyclic nucleotide (c-di-GMP or cGAMP), forms tetramers and higher-order oligomers through side-by-side packing. Interacts (when phosphorylated) with IRF3; following activation and phosphorylation on the pLxIS motif by TBK1, recruits IRF3. Interacts with RIGI, MAVS and SSR2. Interacts with RNF5 and TRIM56. Interacts with TBK1; when homodimer, leading to subsequent production of IFN-beta. Interacts with IFIT1 and IFIT2. Interacts with TRIM29; this interaction induces STING1 ubiquitination and subsequent degradation. Associates with the MHC-II complex. Interacts with STEEP1; interaction takes place upon cGAMP-activation and STING1 phosphorylation by MAP3K7/TAK1 and promotes STING1 translocation to COPII vesicles. Interacts with SEC24A, SEC24B, and SEC24C; promoting translocation to COPII vesicles. Interacts (when ubiquitinated) with SQSTM1; leading to relocalization to autophagosomes. Interacts with SURF4. Interacts with HNRNPA2B1. Interacts with ZDHHC1; ZDHHC1 constitutively interacts with STING1 and in presence of DNA viruses activates it by promoting its cGAMP-induced oligomerization and the recruitment of downstream signaling components. Interacts with ZDHHC11; in presence of DNA viruses promotes the recruitment of IRF3 to STING1. Interacts with TOMM70. Interacts with isoform IFI16-beta of IFI16. Interacts with TAB1; promoting recruitment of TAB1 to the endoplasmic reticulum membrane and subsequent activation of MAP3K7/TAK1. Interacts (via transmembrane domain) with TMEM203. Interacts with DDX41. Interacts with TMEM120A (via C-terminal domain); regulates the trafficking of STING1 from the ER to the ER-Golgi intermediate compartment to elicit antiviral effects. In terms of assembly, (Microbial infection) Interacts with human papillomavirus (HPV) protein E7. As to quaternary structure, (Microbial infection) Interacts with adenovirus early E1A protein. (Microbial infection) Interacts with herpes simplex virus 1 protein ICP34.5; this interaction inhibits the intracellular DNA sensing pathway. In terms of assembly, (Microbial infection) Interacts with Chikungunya virus non-structural protein 1; this interaction results in inhibition of cGAS-STING signaling and increased levels of palmitoylated nsP1 and protein stabilization. As to quaternary structure, (Microbial infection) Interacts with human cytomegalovirus proteins UL94, UL42 and UL138; these interactions result in the inhibition of cGAS-STING signaling. (Microbial infection) Interacts with varivella virus protein 39; this interaction results in the inhibition of cGAS-STING signaling. In terms of processing, phosphorylation by TBK1 leads to activation and production of IFN-beta. Following cyclic nucleotide (c-di-GMP or cGAMP)-binding, activation and translocation from the endoplasmic reticulum, STING1 is phosphorylated by TBK1 at Ser-366 in the pLxIS motif. The phosphorylated pLxIS motif constitutes an IRF3-binding motif, leading to recruitment of the transcription factor IRF3 to induce type-I interferons and other cytokines. The phosphorylated pLxIS motif facilitates SENP2 recruitment during late phase of viral infection. Phosphorylated on tyrosine residues upon MHC-II aggregation. Dephosphorylation by PPP6C leads to inactivation and decreased production of IFN-beta. Phosphorylation at Ser-358 is also required to activate IRF3. Phosphorylation at Ser-355 by MAP3K7/TAK1 facilitates its interaction with STEEP1, promoting STING1 translocation to COPII vesicles. Ubiquitinated. Ubiquitinated via 'Lys-63'-linked ubiquitin chains in response to double-stranded DNA treatment, leading to relocalization to autophagosomes and subsequent degradation; this process is dependent on SQSTM1. 'Lys-63'-linked ubiquitination mediated by TRIM56 at Lys-150 promotes homodimerization and recruitment of the antiviral kinase TBK1 and subsequent production of IFN-beta. 'Lys-48'-linked polyubiquitination at Lys-150 occurring after viral infection is mediated by RNF5 and leads to proteasomal degradation. 'Lys-11'-linked polyubiquitination at Lys-150 by RNF26 leads to stabilize STING1: it protects STING1 from RNF5-mediated 'Lys-48'-linked polyubiquitination. 'Lys-33'-linked and 'Lys-48'-linked deubiquitinated by USP20; leading to its stabilization and promotion of innate antiviral response. 'Lys-48'-linked deubiquitinated by USP44; leading to its stabilization and promotion of innate antiviral response. Deubiquitinated by USP13; leading to inhibition of innate antiviral response. 'Lys-63'-linked deubiquitinated by USP49; leading to inhibition of the subsequent recruitment of TBK1 to the signaling complex. 'Lys-63'-linked ubiquitination mediated by RNF39 promotes the activation of the cGAS-STING pathway. MARCHF5-mediated ubiquitination prevents the oxidation-induced polymer formation. Post-translationally, (Microbial infection) Deubiquitinated by Epstein-Barr virus BPLF1 on both 'Lys-48' and 'Lys-63'-linked ubiquitin chains; leading to inhibition of cGAS-STING signaling. In terms of processing, sumoylated at Lys-338 by TRIM38 during the early phase of viral infection, promoting its stability by preventing its relocalization to autophagosomes and subsequent degradation. Desumoylated by SENP2 during the late phase of viral infection. Palmitoylation takes place in the Golgi apparatus and creates a platform for the recruitment of TBK1. Ubiquitously expressed. Expressed in skin endothelial cells, alveolar type 2 pneumocytes, bronchial epithelium and alveolar macrophages.

It is found in the endoplasmic reticulum membrane. The protein localises to the cytoplasm. The protein resides in the perinuclear region. Its subcellular location is the endoplasmic reticulum-Golgi intermediate compartment membrane. It localises to the golgi apparatus membrane. It is found in the cytoplasmic vesicle. The protein localises to the autophagosome membrane. The protein resides in the mitochondrion outer membrane. Its subcellular location is the cell membrane. The enzyme catalyses H(+)(in) = H(+)(out). Its activity is regulated as follows. Activated upon binding to the hydrolysis-resistant 2'3'-cG(s)A(s)MP, an analog of cGAMP, in which phosphodiester linkages are replaced by phosphothioate linkages. Specifically inhibited by small-molecule H-151 (N-(4-ethylphenyl)-N'-1H-indol-3-yl-urea), which covalently binds Cys-91 and prevents palmitoylation and subsequent activation of STING1. In contrast to mouse protein, not activated by anticancer molecule 5,6-dimethylxanthenone 4-acetic acid (DMXAA). Inhibited by compound 18 ([(3S,4S)-2-(4-tert-butyl-3-chlorophenyl)-3-(2,3-dihydro-1,4-benzodioxin-6-yl)-7-fluoro-1-oxo-1,2,3,4-tetrahydroisoquinolin-4-yl]acetate), a competitive inhibitor with slow dissociation kinetics and good oral bioavailability. Homooligomerization and ability to promote the production of type I interferons is activated by C53, a small benzothiazinone-like compound that binds to the transmembrane regions. in the area of the putative pore. In contrast, compound C53, directly inhibits the proton channel activity and facilitate MAP1LC3B/LC3B lipidation and autophagosome formation. Facilitator of innate immune signaling that acts as a sensor of cytosolic DNA from bacteria and viruses and promotes the production of type I interferon (IFN-alpha and IFN-beta). Innate immune response is triggered in response to non-CpG double-stranded DNA from viruses and bacteria delivered to the cytoplasm. Acts by binding cyclic dinucleotides: recognizes and binds cyclic di-GMP (c-di-GMP), a second messenger produced by bacteria, cyclic UMP-AMP (2',3'-cUAMP), and cyclic GMP-AMP (cGAMP), a messenger produced by CGAS in response to DNA virus in the cytosol. Upon binding to c-di-GMP, cUAMP or cGAMP, STING1 oligomerizes, translocates from the endoplasmic reticulum and is phosphorylated by TBK1 on the pLxIS motif, leading to recruitment and subsequent activation of the transcription factor IRF3 to induce expression of type I interferon and exert a potent anti-viral state. Exhibits 2',3' phosphodiester linkage-specific ligand recognition: can bind both 2'-3' linked cGAMP (2'-3'-cGAMP) and 3'-3' linked cGAMP but is preferentially activated by 2'-3' linked cGAMP. The preference for 2'-3'-cGAMP, compared to other linkage isomers is probably due to the ligand itself, whichs adopts an organized free-ligand conformation that resembles the STING1-bound conformation and pays low energy costs in changing into the active conformation. In addition to promote the production of type I interferons, plays a direct role in autophagy. Following cGAMP-binding, STING1 buds from the endoplasmic reticulum into COPII vesicles, which then form the endoplasmic reticulum-Golgi intermediate compartment (ERGIC). The ERGIC serves as the membrane source for WIPI2 recruitment and LC3 lipidation, leading to formation of autophagosomes that target cytosolic DNA or DNA viruses for degradation by the lysosome. Promotes autophagy by acting as a proton channel that directs proton efflux from the Golgi to facilitate MAP1LC3B/LC3B lipidation. The autophagy- and interferon-inducing activities can be uncoupled and autophagy induction is independent of TBK1 phosphorylation. Autophagy is also triggered upon infection by bacteria: following c-di-GMP-binding, which is produced by live Gram-positive bacteria, promotes reticulophagy. May be involved in translocon function, the translocon possibly being able to influence the induction of type I interferons. May be involved in transduction of apoptotic signals via its association with the major histocompatibility complex class II (MHC-II). Functionally, (Microbial infection) Antiviral activity is antagonized by oncoproteins, such as papillomavirus (HPV) protein E7 and adenovirus early E1A protein. Such oncoproteins prevent the ability to sense cytosolic DNA. This is Stimulator of interferon genes protein from Homo sapiens (Human).